The following is a 210-amino-acid chain: Leucyl/phenylalanyl-tRNA--protein transferase (210 aa).

It belongs to the L/F-transferase family.

Its subcellular location is the cytoplasm. The enzyme catalyses N-terminal L-lysyl-[protein] + L-leucyl-tRNA(Leu) = N-terminal L-leucyl-L-lysyl-[protein] + tRNA(Leu) + H(+). The catalysed reaction is N-terminal L-arginyl-[protein] + L-leucyl-tRNA(Leu) = N-terminal L-leucyl-L-arginyl-[protein] + tRNA(Leu) + H(+). It carries out the reaction L-phenylalanyl-tRNA(Phe) + an N-terminal L-alpha-aminoacyl-[protein] = an N-terminal L-phenylalanyl-L-alpha-aminoacyl-[protein] + tRNA(Phe). In terms of biological role, functions in the N-end rule pathway of protein degradation where it conjugates Leu, Phe and, less efficiently, Met from aminoacyl-tRNAs to the N-termini of proteins containing an N-terminal arginine or lysine. In Ruegeria sp. (strain TM1040) (Silicibacter sp.), this protein is Leucyl/phenylalanyl-tRNA--protein transferase.